The sequence spans 719 residues: Polyribonucleotide nucleotidyltransferase (719 aa).

Mg(2+)-binding residues include aspartate 491 and aspartate 497. The KH domain occupies 558-617; it reads PRMLTIKINPEKIRDVIGKGGATIRALTEETGTQIDISDDGTIVIASVDETQAKEAQRRI. Residues 627-695 form the S1 motif domain; the sequence is GQIYDGSVLR…DKGRLRLSIK (69 aa).

Belongs to the polyribonucleotide nucleotidyltransferase family. It depends on Mg(2+) as a cofactor.

Its subcellular location is the cytoplasm. It catalyses the reaction RNA(n+1) + phosphate = RNA(n) + a ribonucleoside 5'-diphosphate. In terms of biological role, involved in mRNA degradation. Catalyzes the phosphorolysis of single-stranded polyribonucleotides processively in the 3'- to 5'-direction. The protein is Polyribonucleotide nucleotidyltransferase of Bordetella parapertussis (strain 12822 / ATCC BAA-587 / NCTC 13253).